A 467-amino-acid chain; its full sequence is MEQNVGYVVQIIGPVVDVRFESGNLPAINNAIEIHFDGKTLVAEVAQHLGNDTVRCVALGSTDGLRRGVKAIDTGGPIKVPVGRGTLGRIFNVLGQPIDNKGEVQATDYWPIHRSAPSFEEQVPAVEIFETGIKVIDLLAPYAKGGKIGLFGGAGVGKTVLIMELIRNIATEHGGFSIFTGVGERTREGNDLWLEMNESGVIEKTVLVFGQMNEPPGARMRVALTGLTMAEYFRDVEGQDVLLFIDNIFRFIQAGSEVSALLGRIPSAVGYQPTLANEVGALQERITSTKRGSITSVQAIYVPADDLTDPAPATTFAHLDATTVLSRQIAELGIYPAVDPLDSTSRILDPRIVGEEHYYVARTVQQILQRYKELQDIIAILGMDELSEEDKLIVYRARKIQRFLSQPFFVAEAFTGRPGRYVKLKDTIRGFKEIIEGKMDHIPEQYFYMVGTIDEVYENYEKDMKGK.

152–159 contributes to the ATP binding site; sequence GGAGVGKT.

It belongs to the ATPase alpha/beta chains family. F-type ATPases have 2 components, CF(1) - the catalytic core - and CF(0) - the membrane proton channel. CF(1) has five subunits: alpha(3), beta(3), gamma(1), delta(1), epsilon(1). CF(0) has three main subunits: a(1), b(2) and c(9-12). The alpha and beta chains form an alternating ring which encloses part of the gamma chain. CF(1) is attached to CF(0) by a central stalk formed by the gamma and epsilon chains, while a peripheral stalk is formed by the delta and b chains.

The protein localises to the cell membrane. It carries out the reaction ATP + H2O + 4 H(+)(in) = ADP + phosphate + 5 H(+)(out). Functionally, produces ATP from ADP in the presence of a proton gradient across the membrane. The catalytic sites are hosted primarily by the beta subunits. This is ATP synthase subunit beta from Caldicellulosiruptor saccharolyticus (strain ATCC 43494 / DSM 8903 / Tp8T 6331).